Here is a 382-residue protein sequence, read N- to C-terminus: UDP-4-amino-4-deoxy-L-arabinose--oxoglutarate aminotransferase (382 aa).

An N6-(pyridoxal phosphate)lysine modification is found at lysine 183.

It belongs to the DegT/DnrJ/EryC1 family. ArnB subfamily. In terms of assembly, homodimer. Pyridoxal 5'-phosphate serves as cofactor.

It catalyses the reaction UDP-4-amino-4-deoxy-beta-L-arabinose + 2-oxoglutarate = UDP-beta-L-threo-pentopyranos-4-ulose + L-glutamate. Its pathway is nucleotide-sugar biosynthesis; UDP-4-deoxy-4-formamido-beta-L-arabinose biosynthesis; UDP-4-deoxy-4-formamido-beta-L-arabinose from UDP-alpha-D-glucuronate: step 2/3. It functions in the pathway bacterial outer membrane biogenesis; lipopolysaccharide biosynthesis. Functionally, catalyzes the conversion of UDP-4-keto-arabinose (UDP-Ara4O) to UDP-4-amino-4-deoxy-L-arabinose (UDP-L-Ara4N). The modified arabinose is attached to lipid A and is required for resistance to polymyxin and cationic antimicrobial peptides. The chain is UDP-4-amino-4-deoxy-L-arabinose--oxoglutarate aminotransferase from Pseudomonas syringae pv. syringae (strain B728a).